A 257-amino-acid chain; its full sequence is Snake venom serine protease serpentokallikrein-2 (257 aa).

The first 18 residues, 1-18, serve as a signal peptide directing secretion; that stretch reads MVLIRVLANLLILQLSYA. Positions 19 to 24 are excised as a propeptide; that stretch reads QKSSEL. The Peptidase S1 domain maps to 25–248; sequence VIGGDECNIN…HLDWIKGIIA (224 aa). Cystine bridges form between Cys-31-Cys-162, Cys-49-Cys-65, Cys-97-Cys-255, Cys-141-Cys-209, Cys-173-Cys-188, and Cys-199-Cys-224. His-64 acts as the Charge relay system in catalysis. N-linked (GlcNAc...) asparagine glycosylation is present at Asn-102. Catalysis depends on Asp-109, which acts as the Charge relay system. Catalysis depends on Ser-203, which acts as the Charge relay system.

Belongs to the peptidase S1 family. Snake venom subfamily. Monomer. Expressed by the venom gland.

It localises to the secreted. In terms of biological role, snake venom serine protease that may act in the hemostasis system of the prey. This chain is Snake venom serine protease serpentokallikrein-2, found in Protobothrops mucrosquamatus (Taiwan habu).